The chain runs to 369 residues: Nuclear pore complex-interacting protein family member A2 (369 aa).

The segment at 325–346 (KTPPECLLTPLPPSAPPSADDN) is disordered.

It belongs to the NPIP family.

The chain is Nuclear pore complex-interacting protein family member A2 (NPIPA2) from Homo sapiens (Human).